The following is a 229-amino-acid chain: Transcriptional activator protein YukR (229 aa).

The HTH luxR-type domain occupies 157 to 222 (DTSGKGILSP…QAIRLGVELE (66 aa)). Positions 181 to 200 (YPEIALIAGITTRTVKHHMG) form a DNA-binding region, H-T-H motif.

It belongs to the autoinducer-regulated transcriptional regulatory protein family.

Its function is as follows. Probable transcriptional activator. Binds to an autoinducer molecule. This Yersinia ruckeri protein is Transcriptional activator protein YukR (yukR).